The sequence spans 28 residues: Cytochrome c oxidase subunit 5B, mitochondrial (28 aa).

Belongs to the cytochrome c oxidase subunit 5B family. In terms of assembly, component of the cytochrome c oxidase (complex IV, CIV), a multisubunit enzyme composed of a catalytic core of 3 subunits and several supernumerary subunits. The complex exists as a monomer or a dimer and forms supercomplexes (SCs) in the inner mitochondrial membrane with ubiquinol-cytochrome c oxidoreductase (cytochrome b-c1 complex, complex III, CIII).

The protein resides in the mitochondrion inner membrane. It participates in energy metabolism; oxidative phosphorylation. Its function is as follows. Component of the cytochrome c oxidase, the last enzyme in the mitochondrial electron transport chain which drives oxidative phosphorylation. The respiratory chain contains 3 multisubunit complexes succinate dehydrogenase (complex II, CII), ubiquinol-cytochrome c oxidoreductase (cytochrome b-c1 complex, complex III, CIII) and cytochrome c oxidase (complex IV, CIV), that cooperate to transfer electrons derived from NADH and succinate to molecular oxygen, creating an electrochemical gradient over the inner membrane that drives transmembrane transport and the ATP synthase. Cytochrome c oxidase is the component of the respiratory chain that catalyzes the reduction of oxygen to water. Electrons originating from reduced cytochrome c in the intermembrane space (IMS) are transferred via the dinuclear copper A center (CU(A)) of subunit 2 and heme A of subunit 1 to the active site in subunit 1, a binuclear center (BNC) formed by heme A3 and copper B (CU(B)). The BNC reduces molecular oxygen to 2 water molecules using 4 electrons from cytochrome c in the IMS and 4 protons from the mitochondrial matrix. In Solanum tuberosum (Potato), this protein is Cytochrome c oxidase subunit 5B, mitochondrial.